The following is a 469-amino-acid chain: Pancreatic lipase-related protein 2 (469 aa).

A signal peptide spans 1–17; sequence MLPPWTLGLLLLATVRG. Residues Cys-21 and Cys-27 are joined by a disulfide bond. A required for galactolipase activity region spans residues 93–105; sequence IHGFLDKAEDSWP. Cysteines 109 and 120 form a disulfide. Ser-171 serves as the catalytic Nucleophile. The active-site Charge relay system is the Asp-195. Residues Glu-206, Arg-209, Asp-211, and Asp-214 each coordinate Ca(2+). The cysteines at positions 256 and 280 are disulfide-linked. Positions 257 to 279 are required for galactolipase activity; that stretch reads KKNVLSTITDIDGIWEGIGGFVS. His-282 serves as the catalytic Charge relay system. 2 disulfide bridges follow: Cys-304–Cys-315 and Cys-318–Cys-323. N-linked (GlcNAc...) asparagine glycans are attached at residues Asn-353 and Asn-428. Residues 357–469 enclose the PLAT domain; it reads WRYKISVTLS…ENVLQSLYPC (113 aa). A disulfide bond links Cys-453 and Cys-469.

Belongs to the AB hydrolase superfamily. Lipase family. In terms of tissue distribution, pancreas.

It localises to the secreted. The protein localises to the zymogen granule membrane. Its subcellular location is the cell projection. The protein resides in the neuron projection. It catalyses the reaction a triacylglycerol + H2O = a diacylglycerol + a fatty acid + H(+). The catalysed reaction is a 1,2-diacyl-3-O-(beta-D-galactosyl)-sn-glycerol + 2 H2O = 3-beta-D-galactosyl-sn-glycerol + 2 a fatty acid + 2 H(+). The enzyme catalyses 1,2,3-tri-(9Z-octadecenoyl)-glycerol + H2O = di-(9Z)-octadecenoylglycerol + (9Z)-octadecenoate + H(+). It carries out the reaction di-(9Z)-octadecenoylglycerol + H2O = (9Z-octadecenoyl)-glycerol + (9Z)-octadecenoate + H(+). It catalyses the reaction (9Z-octadecenoyl)-glycerol + H2O = glycerol + (9Z)-octadecenoate + H(+). The catalysed reaction is 1-(9Z-octadecenoyl)-glycerol + H2O = glycerol + (9Z)-octadecenoate + H(+). The enzyme catalyses 1,2,3-tripropanoylglycerol + H2O = dipropanoylglycerol + propanoate + H(+). It carries out the reaction 1,2,3-tributanoylglycerol + H2O = dibutanoylglycerol + butanoate + H(+). It catalyses the reaction 1,2,3-trioctanoylglycerol + H2O = dioctanoylglycerol + octanoate + H(+). The catalysed reaction is 1,2-didecanoylglycerol + H2O = decanoylglycerol + decanoate + H(+). The enzyme catalyses long chain 1,2-diacyl-3-O-beta-D-galactosyl-sn-glycerol + H2O = long chain acyl-3-O-beta-D-galactosyl-sn-glycerol + a fatty acid + H(+). It carries out the reaction 1,2-dioctanoyl-3-O-beta-D-galactosyl-sn-glycerol + H2O = octanoyl-3-(beta-D-galactosyl)-sn-glycerol + octanoate + H(+). It catalyses the reaction 1,2-didodecanoyl-3-beta-D-galactosyl-sn-glycerol + H2O = dodecanoyl-3-beta-D-galactosyl-sn-glycerol + dodecanoate + H(+). The catalysed reaction is 1-beta-D-galactosyl-2,3-didodecanoyl-sn-glycerol + H2O = 1-beta-D-galactosyl-dodecanoyl-sn-glycerol + dodecanoate + H(+). The enzyme catalyses a 1,2-diacyl-3-O-[alpha-D-galactosyl-(1-&gt;6)-beta-D-galactosyl]-sn-glycerol + H2O = acyl-3-O-[alpha-D-galactosyl-(1-&gt;6)-beta-D-galactosyl]-sn-glycerol + a fatty acid + H(+). It carries out the reaction long chain 1,2-diacyl-3-O-[alpha-D-galactosyl-(1-&gt;6)-beta-D-galactosyl]-sn-glycerol + H2O = long chain acyl-3-O-[alpha-D-galactosyl-(1-&gt;6)-beta-D-galactosyl]-sn-glycerol + a fatty acid + H(+). It catalyses the reaction 1,2-dioctanoyl-3-O-[alpha-D-galactosyl-(1-&gt;6)-beta-D-galactosyl]-sn-glycerol + H2O = octanoyl-3-O-[alpha-D-galactosyl-(1-&gt;6)-beta-D-galactosyl]-sn-glycerol + octanoate + H(+). The catalysed reaction is 1,2-didodecanoyl-3-O-[alpha-D-galactosyl-(1-&gt;6)-beta-D-galactosyl]-sn-glycerol + H2O = dodecanoyl-3-O-[alpha-D-galactosyl-(1-&gt;6)-beta-D-galactosyl]-sn-glycerol + dodecanoate + H(+). The enzyme catalyses a 1,2-diacyl-sn-glycero-3-phosphocholine + H2O = a monoacyl-sn-glycero-3-phosphocholine + a fatty acid + H(+). Its pathway is glycerolipid metabolism; triacylglycerol degradation. The protein operates within glycolipid metabolism. Its activity is regulated as follows. Regulated by CLPS and bile salts levels ranging 1-5 mM in neonates and 2-30 mM in healthy adults. CLPS stimulates milk fat digestion in the presence of 4 mM bile salts. Triacylglycerol lipase activity toward short- and medium-chain triglycerides is inhibited by increasing concentrations of bile salts and weakly reactivated by CLPS. Optimal triacylglycerol lipase activity is reached at bile salts concentrations ranging from 0.1 to 0.5 mM and then decreases at concentrations higher than 1 mM. Lipase activity toward long-chain glycerolipids is stimulated by CLPS in the presence of 4 mM bile salts. Galactolipase activity is inhibited at high concentrations of bile salts. Triacylglycerol lipase activity is inhibited by anti-obesity drug tetrahydrolipstatin. Lipase that primarily hydrolyzes triglycerides and galactosylglycerides. In neonates, may play a major role in pancreatic digestion of dietary fats such as milk fat globules enriched in long-chain triglycerides. Hydrolyzes short-, medium- and long-chain fatty acyls in triglycerides without apparent positional specificity. Can completely deacylate triacylglycerols. When the liver matures and bile salt synthesis increases, likely functions mainly as a galactolipase and monoacylglycerol lipase. Hydrolyzes monogalactosyldiglycerols (MGDG) and digalactosyldiacylglycerols (DGDG) present in a plant-based diet, releasing long-chain polyunsaturated fatty acids. Hydrolyzes medium- and long-chain fatty acyls in galactolipids. May act together with LIPF to hydrolyze partially digested triglycerides. Hydrolyzes long-chain monoglycerides with high efficiency. In cytotoxic T cells, contributes to perforin-dependent cell lysis, but is unlikely to mediate direct cytotoxicity. Also has low phospholipase activity. In neurons, required for the localization of the phospholipid 1-oleoyl-2-palmitoyl-PC (OPPC) to neurite tips through acyl chain remodeling of membrane phospholipids. The resulting OPPC-rich lipid membrane domain recruits the t-SNARE protein STX4 by selectively interacting with the STX4 transmembrane domain and this promotes surface expression of the dopamine transporter SLC6A3/DAT at neurite tips by facilitating fusion of SLC6A3-containing transport vesicles with the plasma membrane. The chain is Pancreatic lipase-related protein 2 from Homo sapiens (Human).